Reading from the N-terminus, the 143-residue chain is MSHDTDDKTYPYQKDDAELRRRLTPMQYEVTQHAATERAFTGEYTDTEDAGIYKCVVCSTPLFESGAKFHSGCGWPSYFKPLNGEVIDEKIDRTHGMVRVEVRCNHCGAHLGHVFEDGPRDKTGLRYCINSAALNFESRPENE.

The MsrB domain maps to 16–139 (DAELRRRLTP…NSAALNFESR (124 aa)). Zn(2+) is bound by residues Cys-55, Cys-58, Cys-104, and Cys-107. The active-site Nucleophile is Cys-128.

Belongs to the MsrB Met sulfoxide reductase family. It depends on Zn(2+) as a cofactor.

The enzyme catalyses L-methionyl-[protein] + [thioredoxin]-disulfide + H2O = L-methionyl-(R)-S-oxide-[protein] + [thioredoxin]-dithiol. The polypeptide is Peptide methionine sulfoxide reductase MsrB (Burkholderia ambifaria (strain ATCC BAA-244 / DSM 16087 / CCUG 44356 / LMG 19182 / AMMD) (Burkholderia cepacia (strain AMMD))).